A 486-amino-acid chain; its full sequence is tRNA (uracil-5-)-methyltransferase homolog B (486 aa).

Residues Q305, E355, and N405 each coordinate S-adenosyl-L-methionine. The active-site Nucleophile is the C433. E479 acts as the Proton acceptor in catalysis.

The protein belongs to the class I-like SAM-binding methyltransferase superfamily. RNA M5U methyltransferase family.

It is found in the mitochondrion matrix. The enzyme catalyses uridine(54) in tRNA + S-adenosyl-L-methionine = 5-methyluridine(54) in tRNA + S-adenosyl-L-homocysteine + H(+). It catalyses the reaction a uridine in 12S rRNA + S-adenosyl-L-methionine = a 5-methyluridine in 12S rRNA + S-adenosyl-L-homocysteine + H(+). Functionally, mitochondrial S-adenosyl-L-methionine-dependent methyltransferase that catalyzes the formation of 5-methyl-uridine in tRNAs and 12S rRNA. Catalyzes the methylation of uridine at position 54 (m5U54) in all tRNAs. Specifically methylates the uridine in position 429 of 12S rRNA (m5U429). Does not affect RNA stability or mitochondrial translation. The polypeptide is tRNA (uracil-5-)-methyltransferase homolog B (TRMT2B) (Pongo abelii (Sumatran orangutan)).